A 643-amino-acid polypeptide reads, in one-letter code: MALDSSVALSPRRRHGLLRDQVQLIKRKDSGRYEIVPIEDPLSFEKGFYAVIRACQLLAQKNDGLILVGLAGPSGAGKTIFTEKILNFMPSIAIINMDNYNDGTRVIDGNFDDPRLTDYDTLLDNIHGLRDGKPVQVPIYDFKSSSRIGYRTLEVPSSRIVILEGIYALSEKLRPLLDLRVSVTGGVHFDLVKRVLRDIQRAGQEPEEIIHQISETVYPMYKAFIEPDLKTAQIKILNKFNPFSGFQNPTYILKSSKAVTPEQMKAALSEDFKERTEETYDIYLLPPGEDPEACQSYLRMRNRDGKYNLMFEEWVTDRPFIISPRITFEVSVRLLGGLMALGYTIATILKRKSHIFDDDKVIVKTDWLEQLNRTYVQVQGKDRTFVKNVADQLGLEGSYVPHTYIEQIQLERLVNDVLALPDDLKTKLSLDDDTVSSPKEALSRASVDSRMKYLHGGVSKSYTNPRHKVLPNLTRLAVNNRMLDARAPASPATLPNQGFITQLSDQISTLNERMDEFTSRIEELNSKIPNRIAPSGSQHNLALPIENGNGSVLSFSASASQLVRESPLMEEVVLVARGQRQIMHQMDTLSNLLREYVGEKTRIERLDSSRTNSTTQNLESSTVPILLGLAIGCVGIFAYSRLK.

A mitochondrion-targeting transit peptide spans 1–15 (MALDSSVALSPRRRH). The CYTH domain occupies 248-410 (NPTYILKSSK…PHTYIEQIQL (163 aa)). Residues 618 to 638 (LESSTVPILLGLAIGCVGIFA) traverse the membrane as a helical segment.

Mg(2+) serves as cofactor. As to expression, ubiquitously expressed in all tissues, with strong expression detected in senescent leaves.

It is found in the mitochondrion outer membrane. The catalysed reaction is diphosphate + H2O = 2 phosphate + H(+). Functionally, exhibits pyrophosphatase activity with stronger affinity for pyrophosphate (PPi), moderate affinity for ATP and ADP, and weak affinity for tripolyphosphate (PPPi). No activity observed toward uridine substrate. Positively regulates natural and dark-induced leaf senescence. The sequence is that of Inorganic pyrophosphatase TTM1 from Arabidopsis thaliana (Mouse-ear cress).